The primary structure comprises 207 residues: Phosphatidylinositol phosphate synthase (207 aa).

2 helical membrane passes run 21 to 44 (LRAH…MALI) and 50 to 67 (WLWQ…SDSL). Residue 28 to 31 (DVVT) coordinates a CDP-1,2-diacyl-sn-glycerol. Mg(2+) is bound by residues Asp65 and Asp68. Residues Gly69, Arg73, and Ser79 each coordinate a CDP-1,2-diacyl-sn-glycerol. The Mg(2+) site is built by Asp86 and Asp90. 4 consecutive transmembrane segments (helical) span residues 88–106 (TLDR…LYFA), 112–131 (VLWT…TSYV), 152–170 (RLLV…RVGA), and 176–195 (VVAL…ITVV). Asp90 serves as the catalytic Proton acceptor.

Belongs to the CDP-alcohol phosphatidyltransferase class-I family. In terms of assembly, homodimer. The cofactor is Mg(2+).

The protein resides in the cell membrane. It catalyses the reaction a CDP-1,2-diacyl-sn-glycerol + 1D-myo-inositol 3-phosphate = a 1,2-diacyl-sn-glycero-3-phospho-(1D-myo-inositol-3-phosphate) + CMP + H(+). The catalysed reaction is 1,2-di-(9Z-octadecenoyl)-sn-glycero-3-cytidine-5'-diphosphate + 1D-myo-inositol 3-phosphate = 1,2-di-(9Z-octadecenoyl)-sn-glycero-3-phospho-(1D-myo-inositol-3-phosphate) + CMP + H(+). It functions in the pathway phospholipid metabolism; phosphatidylinositol phosphate biosynthesis. In terms of biological role, catalyzes the conjugation of the 1'-hydroxyl group of D-myo-inositol-3-phosphate (also named L-myo-inositol-1-phosphate) with a lipid tail of cytidine diphosphate diacylglycerol (CDP-DAG), forming phosphatidylinositol phosphate (PIP) and CMP. PIP is a precursor of phosphatidylinositol (PI) which is an essential lipid required for cell wall formation. This chain is Phosphatidylinositol phosphate synthase, found in Cutibacterium acnes (strain DSM 16379 / KPA171202) (Propionibacterium acnes).